The following is a 1620-amino-acid chain: ALK tyrosine kinase receptor (1620 aa).

The first 18 residues, 1-18, serve as a signal peptide directing secretion; the sequence is MGAIGLLWLLPLLLSTAA. Over 19–1038 the chain is Extracellular; the sequence is VGSGMGTGQR…PHLPLSLILS (1020 aa). The interval 48–70 is heparin-binding region; sequence RLQRKSLAVDFVVPSLFRVYARD. 10 N-linked (GlcNAc...) asparagine glycosylation sites follow: Asn169, Asn244, Asn285, Asn324, Asn411, Asn424, Asn445, Asn563, Asn571, and Asn627. The MAM 1 domain occupies 264-427; sequence LECSFDFPCE…DFFALKNCSE (164 aa). Positions 437–473 constitute an LDL-receptor class A domain; that stretch reads LQSSFTCWNGTVLQLGQACDFHQDCAQGEDESQMCRK. In terms of domain architecture, MAM 2 spans 478 to 636; sequence FYCNFEDGFC…NISISLDCYL (159 aa). Residues 650-674 form a disordered region; it reads PKSRNLFERNPNKELKPGENSPRQT. Over residues 654-666 the composition is skewed to basic and acidic residues; that stretch reads NLFERNPNKELKP. Cys688 and Cys701 are disulfide-bonded. Asn709 is a glycosylation site (N-linked (GlcNAc...) asparagine). The cysteines at positions 783 and 794 are disulfide-linked. Residues Asn808, Asn863, Asn864, and Asn886 are each glycosylated (N-linked (GlcNAc...) asparagine). A disulfide bridge connects residues Cys906 and Cys928. Asn986 carries N-linked (GlcNAc...) asparagine glycosylation. 3 disulfides stabilise this stretch: Cys987-Cys995, Cys990-Cys1006, and Cys1008-Cys1021. An EGF-like region spans residues 987-1025; it reads CSHCEVDECHMDPESHKVICFCDHGTVLAEDGVSCIVSP. Residues 1039–1059 form a helical membrane-spanning segment; sequence VVTSALVAALVLAFSGIMIVY. Over 1060–1620 the chain is Cytoplasmic; it reads RRKHQELQAM…SKNSMNQPGP (561 aa). A phosphotyrosine mark is found at Tyr1078, Tyr1092, and Tyr1096. The Protein kinase domain maps to 1116-1392; sequence ITLIRGLGHG…IEYCTQDPDV (277 aa). His1124 lines the ATP pocket. Position 1131 is a phosphotyrosine (Tyr1131). Residues Lys1150 and 1197–1199 each bind ATP; that span reads ELM. Catalysis depends on Asp1249, which acts as the Proton acceptor. An ATP-binding site is contributed by Asp1270. A Phosphotyrosine modification is found at Tyr1278. Positions 1408–1463 are disordered; sequence EEKVPVRPKDPEGVPPLLVSQQAKREEERSPAAPPPLPTTSSGKAAKKPTAAEISV. Residues 1410 to 1419 are compositionally biased toward basic and acidic residues; that stretch reads KVPVRPKDPE. At Tyr1507 the chain carries Phosphotyrosine. The tract at residues 1514 to 1540 is disordered; that stretch reads KPTKKNNPIAKKEPHDRGNLGLEGSCT. Residue Tyr1604 is modified to Phosphotyrosine.

This sequence belongs to the protein kinase superfamily. Tyr protein kinase family. Insulin receptor subfamily. As to quaternary structure, homodimer; homodimerizes following heparin- and ligand-binding. Interacts with CBL, IRS1, PIK3R1 and PLCG1. Interacts with FRS2 and SHC1. Interacts with PTN and MDK. In terms of processing, phosphorylated at tyrosine residues by autocatalysis, which activates kinase activity. In cells not stimulated by a ligand, receptor protein tyrosine phosphatase beta and zeta complex (PTPRB/PTPRZ1) dephosphorylates ALK at the sites in ALK that are undergoing autophosphorylation through autoactivation. Phosphorylation at Tyr-1507 is critical for SHC1 association. Post-translationally, N-glycosylated. As to expression, expressed in brain and CNS. Also expressed in the small intestine and testis, but not in normal lymphoid cells.

Its subcellular location is the cell membrane. The enzyme catalyses L-tyrosyl-[protein] + ATP = O-phospho-L-tyrosyl-[protein] + ADP + H(+). Its activity is regulated as follows. Activated upon ALKAL2 ligand-binding. ALKAL2-driven activation is coupled with heparin-binding. Following ligand-binding, homodimerizes and autophosphorylates, activating its kinase activity. Inactivated through dephosphorylation by receptor protein tyrosine phosphatase beta and zeta complex (PTPRB/PTPRZ1) when there is no stimulation by a ligand. Staurosporine, crizotinib and CH5424802 act as inhibitors of ALK kinase activity. Its function is as follows. Neuronal receptor tyrosine kinase that is essentially and transiently expressed in specific regions of the central and peripheral nervous systems and plays an important role in the genesis and differentiation of the nervous system. Also acts as a key thinness protein involved in the resistance to weight gain: in hypothalamic neurons, controls energy expenditure acting as a negative regulator of white adipose tissue lipolysis and sympathetic tone to fine-tune energy homeostasis. Following activation by ALKAL2 ligand at the cell surface, transduces an extracellular signal into an intracellular response. In contrast, ALKAL1 is not a potent physiological ligand for ALK. Ligand-binding to the extracellular domain induces tyrosine kinase activation, leading to activation of the mitogen-activated protein kinase (MAPK) pathway. Phosphorylates almost exclusively at the first tyrosine of the Y-x-x-x-Y-Y motif. Induces tyrosine phosphorylation of CBL, FRS2, IRS1 and SHC1, as well as of the MAP kinases MAPK1/ERK2 and MAPK3/ERK1. ALK activation may also be regulated by pleiotrophin (PTN) and midkine (MDK). PTN-binding induces MAPK pathway activation, which is important for the anti-apoptotic signaling of PTN and regulation of cell proliferation. MDK-binding induces phosphorylation of the ALK target insulin receptor substrate (IRS1), activates mitogen-activated protein kinases (MAPKs) and PI3-kinase, resulting also in cell proliferation induction. Drives NF-kappa-B activation, probably through IRS1 and the activation of the AKT serine/threonine kinase. Recruitment of IRS1 to activated ALK and the activation of NF-kappa-B are essential for the autocrine growth and survival signaling of MDK. This Homo sapiens (Human) protein is ALK tyrosine kinase receptor.